A 148-amino-acid polypeptide reads, in one-letter code: Large ribosomal subunit protein bL9 (148 aa).

This sequence belongs to the bacterial ribosomal protein bL9 family.

Its function is as follows. Binds to the 23S rRNA. This Agathobacter rectalis (strain ATCC 33656 / DSM 3377 / JCM 17463 / KCTC 5835 / VPI 0990) (Eubacterium rectale) protein is Large ribosomal subunit protein bL9.